Consider the following 580-residue polypeptide: Isocitrate lyase (580 aa).

Residue 106–108 (SGW) coordinates substrate. Residue D177 coordinates Mg(2+). Residue C215 is the Proton acceptor of the active site. Substrate is bound by residues 216–217 (GH), R252, 441–445 (NLSPS), and T476. A Microbody targeting signal motif is present at residues 578-580 (SRM).

This sequence belongs to the isocitrate lyase/PEP mutase superfamily. Isocitrate lyase family. Homotetramer. It depends on Mg(2+) as a cofactor.

It localises to the glyoxysome. The enzyme catalyses D-threo-isocitrate = glyoxylate + succinate. The protein operates within carbohydrate metabolism; glyoxylate cycle; (S)-malate from isocitrate: step 1/2. Functionally, involved in storage lipid mobilization during the growth of higher plant seedling. This Pinus taeda (Loblolly pine) protein is Isocitrate lyase (ICL 8).